The following is a 164-amino-acid chain: MIILGIDPGSRKTGYGIISKQGNRLIHVDNGAIFTQSAKDFPERLEKIFTGLSEIIAQYRPEVVAVEDVFLAKNAQSALKLGQARGAAIVAAVNVGLPVHEYTAMQVKQAVVGTGRAEKAQVQQMIKALLNLPEVAQEDASDALAVAICHAHSAGINALFKNVR.

Active-site residues include Asp-7, Glu-67, and Asp-139. 3 residues coordinate Mg(2+): Asp-7, Glu-67, and Asp-139.

It belongs to the RuvC family. As to quaternary structure, homodimer which binds Holliday junction (HJ) DNA. The HJ becomes 2-fold symmetrical on binding to RuvC with unstacked arms; it has a different conformation from HJ DNA in complex with RuvA. In the full resolvosome a probable DNA-RuvA(4)-RuvB(12)-RuvC(2) complex forms which resolves the HJ. Requires Mg(2+) as cofactor.

Its subcellular location is the cytoplasm. It carries out the reaction Endonucleolytic cleavage at a junction such as a reciprocal single-stranded crossover between two homologous DNA duplexes (Holliday junction).. Its function is as follows. The RuvA-RuvB-RuvC complex processes Holliday junction (HJ) DNA during genetic recombination and DNA repair. Endonuclease that resolves HJ intermediates. Cleaves cruciform DNA by making single-stranded nicks across the HJ at symmetrical positions within the homologous arms, yielding a 5'-phosphate and a 3'-hydroxyl group; requires a central core of homology in the junction. The consensus cleavage sequence is 5'-(A/T)TT(C/G)-3'. Cleavage occurs on the 3'-side of the TT dinucleotide at the point of strand exchange. HJ branch migration catalyzed by RuvA-RuvB allows RuvC to scan DNA until it finds its consensus sequence, where it cleaves and resolves the cruciform DNA. The sequence is that of Crossover junction endodeoxyribonuclease RuvC from Citrifermentans bemidjiense (strain ATCC BAA-1014 / DSM 16622 / JCM 12645 / Bem) (Geobacter bemidjiensis).